Consider the following 1148-residue polypeptide: Putative transcription factor SEF1 (1148 aa).

Residues 1 to 51 form a disordered region; that stretch reads MVKDNRDSDQDQDFSSAHMKRQPEQQQLQQHQFPSKKQRISHHDDSHQINH. The residue at position 8 (serine 8) is a Phosphoserine. The segment at residues 57–87 is a DNA-binding region (zn(2)-C6 fungal-type); it reads CTHCRQHKIKCDASQNFPHPCSRCEKIGLHC. The interval 148–180 is disordered; it reads PTPGTIIPNPDSSPSSGSPTSSAAQRDSKVSVQ. Residues 150–169 show a composition bias toward low complexity; that stretch reads PGTIIPNPDSSPSSGSPTSS. Serine 263 carries the post-translational modification Phosphoserine. The disordered stretch occupies residues 524–550; the sequence is EESEEDNNDSIDNNNNDKRNKKDEPHV. The span at 538–550 shows a compositional bias: basic and acidic residues; it reads NNDKRNKKDEPHV. Serine 806 is modified (phosphoserine). Positions 1029-1050 are enriched in polar residues; it reads RSQSSMSHSRTPIASKSNNMTD. A disordered region spans residues 1029 to 1063; that stretch reads RSQSSMSHSRTPIASKSNNMTDLHSVVSDPGSSKS.

It localises to the nucleus. Putative transcription factor that seems to be involved in the sporulation process. Suppresses the lethal phenotype of RPM2 deletion. This is Putative transcription factor SEF1 (SEF1) from Saccharomyces cerevisiae (strain ATCC 204508 / S288c) (Baker's yeast).